A 284-amino-acid chain; its full sequence is 4-diphosphocytidyl-2-C-methyl-D-erythritol kinase (284 aa).

Residue Lys-9 is part of the active site. Residue 90-100 coordinates ATP; that stretch reads PLVSGLGGDSS. Asp-132 is a catalytic residue.

It belongs to the GHMP kinase family. IspE subfamily.

The catalysed reaction is 4-CDP-2-C-methyl-D-erythritol + ATP = 4-CDP-2-C-methyl-D-erythritol 2-phosphate + ADP + H(+). The protein operates within isoprenoid biosynthesis; isopentenyl diphosphate biosynthesis via DXP pathway; isopentenyl diphosphate from 1-deoxy-D-xylulose 5-phosphate: step 3/6. In terms of biological role, catalyzes the phosphorylation of the position 2 hydroxy group of 4-diphosphocytidyl-2C-methyl-D-erythritol. The sequence is that of 4-diphosphocytidyl-2-C-methyl-D-erythritol kinase from Dehalococcoides mccartyi (strain ATCC BAA-2100 / JCM 16839 / KCTC 5957 / BAV1).